A 306-amino-acid polypeptide reads, in one-letter code: Pantothenate synthetase (306 aa).

37-44 is a binding site for ATP; sequence MGALHEGH. H44 (proton donor) is an active-site residue. Residue Q69 participates in (R)-pantoate binding. Q69 provides a ligand contact to beta-alanine. An ATP-binding site is contributed by 155-158; that stretch reads GEKD. Q161 serves as a coordination point for (R)-pantoate. ATP is bound by residues V184 and 192 to 195; that span reads KSSR.

Belongs to the pantothenate synthetase family. As to quaternary structure, homodimer.

It localises to the cytoplasm. It catalyses the reaction (R)-pantoate + beta-alanine + ATP = (R)-pantothenate + AMP + diphosphate + H(+). It functions in the pathway cofactor biosynthesis; (R)-pantothenate biosynthesis; (R)-pantothenate from (R)-pantoate and beta-alanine: step 1/1. In terms of biological role, catalyzes the condensation of pantoate with beta-alanine in an ATP-dependent reaction via a pantoyl-adenylate intermediate. In Corynebacterium jeikeium (strain K411), this protein is Pantothenate synthetase.